Consider the following 379-residue polypeptide: Chaperone protein DnaJ (379 aa).

Residues 5 to 70 (DYYEVLGVQK…QKRAAYDRFG (66 aa)) enclose the J domain. A CR-type zinc finger spans residues 137–215 (GATTTVRVPT…CGGQGRVRKE (79 aa)). Cys-150, Cys-153, Cys-167, Cys-170, Cys-189, Cys-192, Cys-203, and Cys-206 together coordinate Zn(2+). CXXCXGXG motif repeat units lie at residues 150 to 157 (CESCNGTG), 167 to 174 (CPTCNGHG), 189 to 196 (CPACHGVG), and 203 to 210 (CRTCGGQG).

It belongs to the DnaJ family. Homodimer. Zn(2+) serves as cofactor.

It localises to the cytoplasm. In terms of biological role, participates actively in the response to hyperosmotic and heat shock by preventing the aggregation of stress-denatured proteins and by disaggregating proteins, also in an autonomous, DnaK-independent fashion. Unfolded proteins bind initially to DnaJ; upon interaction with the DnaJ-bound protein, DnaK hydrolyzes its bound ATP, resulting in the formation of a stable complex. GrpE releases ADP from DnaK; ATP binding to DnaK triggers the release of the substrate protein, thus completing the reaction cycle. Several rounds of ATP-dependent interactions between DnaJ, DnaK and GrpE are required for fully efficient folding. Also involved, together with DnaK and GrpE, in the DNA replication of plasmids through activation of initiation proteins. The sequence is that of Chaperone protein DnaJ from Rhodospirillum centenum (strain ATCC 51521 / SW).